Here is a 132-residue protein sequence, read N- to C-terminus: Large ribosomal subunit protein bL12 (132 aa).

It belongs to the bacterial ribosomal protein bL12 family. As to quaternary structure, homodimer. Part of the ribosomal stalk of the 50S ribosomal subunit. Forms a multimeric L10(L12)X complex, where L10 forms an elongated spine to which 2 to 4 L12 dimers bind in a sequential fashion. Binds GTP-bound translation factors.

Functionally, forms part of the ribosomal stalk which helps the ribosome interact with GTP-bound translation factors. Is thus essential for accurate translation. The protein is Large ribosomal subunit protein bL12 of Ehrlichia canis (strain Jake).